Here is a 300-residue protein sequence, read N- to C-terminus: Probable endonuclease 4 (300 aa).

Zn(2+)-binding residues include His-68, His-109, Glu-144, Asp-178, His-181, His-213, Asp-226, His-228, and Glu-258.

The protein belongs to the AP endonuclease 2 family. Zn(2+) serves as cofactor.

The enzyme catalyses Endonucleolytic cleavage to 5'-phosphooligonucleotide end-products.. In terms of biological role, endonuclease IV plays a role in DNA repair. It cleaves phosphodiester bonds at apurinic or apyrimidinic (AP) sites, generating a 3'-hydroxyl group and a 5'-terminal sugar phosphate. The polypeptide is Probable endonuclease 4 (Latilactobacillus sakei subsp. sakei (strain 23K) (Lactobacillus sakei subsp. sakei)).